Consider the following 456-residue polypeptide: ATP-dependent protease ATPase subunit HslU (456 aa).

ATP is bound by residues isoleucine 18, 60-65 (GVGKTE), aspartate 270, glutamate 334, and arginine 406.

It belongs to the ClpX chaperone family. HslU subfamily. As to quaternary structure, a double ring-shaped homohexamer of HslV is capped on each side by a ring-shaped HslU homohexamer. The assembly of the HslU/HslV complex is dependent on binding of ATP.

Its subcellular location is the cytoplasm. In terms of biological role, ATPase subunit of a proteasome-like degradation complex; this subunit has chaperone activity. The binding of ATP and its subsequent hydrolysis by HslU are essential for unfolding of protein substrates subsequently hydrolyzed by HslV. HslU recognizes the N-terminal part of its protein substrates and unfolds these before they are guided to HslV for hydrolysis. This Exiguobacterium sibiricum (strain DSM 17290 / CCUG 55495 / CIP 109462 / JCM 13490 / 255-15) protein is ATP-dependent protease ATPase subunit HslU.